A 384-amino-acid polypeptide reads, in one-letter code: 8-amino-7-oxononanoate synthase (384 aa).

Arginine 21 is a binding site for substrate. 108–109 (GF) serves as a coordination point for pyridoxal 5'-phosphate. Residue histidine 133 participates in substrate binding. Pyridoxal 5'-phosphate is bound by residues serine 179, histidine 207, and threonine 233. N6-(pyridoxal phosphate)lysine is present on lysine 236. A substrate-binding site is contributed by threonine 352.

It belongs to the class-II pyridoxal-phosphate-dependent aminotransferase family. BioF subfamily. In terms of assembly, homodimer. The cofactor is pyridoxal 5'-phosphate.

It carries out the reaction 6-carboxyhexanoyl-[ACP] + L-alanine + H(+) = (8S)-8-amino-7-oxononanoate + holo-[ACP] + CO2. The protein operates within cofactor biosynthesis; biotin biosynthesis. Its function is as follows. Catalyzes the decarboxylative condensation of pimeloyl-[acyl-carrier protein] and L-alanine to produce 8-amino-7-oxononanoate (AON), [acyl-carrier protein], and carbon dioxide. This is 8-amino-7-oxononanoate synthase from Escherichia coli O7:K1 (strain IAI39 / ExPEC).